Consider the following 66-residue polypeptide: Probable Sec-independent protein translocase protein TatE (66 aa).

The helical transmembrane segment at 1–21 threads the bilayer; the sequence is MEGISITKLLVIAVLIVLLFG. Residues 46–66 form a disordered region; the sequence is ETPAAKKSDGVEAAPRVENKE.

Belongs to the TatA/E family. TatE subfamily.

It is found in the cell inner membrane. Functionally, part of the twin-arginine translocation (Tat) system that transports large folded proteins containing a characteristic twin-arginine motif in their signal peptide across membranes. TatE shares overlapping functions with TatA. The protein is Probable Sec-independent protein translocase protein TatE of Edwardsiella ictaluri (strain 93-146).